The chain runs to 798 residues: MAASLPGPGSRLFRTYGAADGRRQRRPGREAAQWFPPQDRRRFFNSSGSSDASIGDPSQSDDPDDPDDPDFPGSPVRRRRRRPGGRVPKDRPSLTVTPKRWKLRARPSLTVTPRRLGLRARPPQKCSTPCGPLRLPPFPSRDSGRLSPDLSVCGQPRDGDELGISASLFSSLASPCPGSPTPRDSVISIGTSACLVAASAVPSGLHLPEVSLDRASLPCSQEEATGGAKDTRMVHQTRASLRSVLFGLMNSGTPEDSEFRADGKNMRESCCKRKLVVGNGPEGPGLSSTGKRRATGQDSCQERGLQEAVRREHQEASVPKGRIVPRGIDRLERTRSSRKSKHQEATETSLLHSHRFKKGQKLGKDSFPTQDLTPLQNVCFWTKTRASFSFHKKKIVTDVSEVCSIYTTATSLSGSLLSECSNRPVMNRTSGAPSSWHSSSMYLLSPLNTLSISNKKASDAEKVYGECSQKGPVPFSHCLPTEKLQRCEKIGEGVFGEVFQTIADHTPVAIKIIAIEGPDLVNGSHQKTFEEILPEIIISKELSLLSGEVCNRTEGFIGLNSVHCVQGSYPPLLLKAWDHYNSTKGSANDRPDFFKDDQLFIVLEFEFGGIDLEQMRTKLSSLATAKSILHQLTASLAVAEASLRFEHRDLHWGNVLLKKTSLKKLHYTLNGKSSTIPSCGLQVSIIDYTLSRLERDGIVVFCDVSMDEDLFTGDGDYQFDIYRLMKKENNNRWGEYHPYSNVLWLHYLTDKMLKQMTFKTKCNTPAMKQIKRKIQEFHRTMLNFSSATDLLCQHSLFK.

A disordered region spans residues 1 to 110 (MAASLPGPGS…WKLRARPSLT (110 aa)). Ser58 is subject to Phosphoserine. Residues 59–70 (QSDDPDDPDDPD) show a composition bias toward acidic residues. A Phosphoserine; by AURKB modification is found at Ser93. Thr97 bears the Phosphothreonine mark. Phosphoserine; by AURKB is present on Ser143. A Phosphoserine modification is found at Ser147. Residues 275–350 (LVVGNGPEGP…KHQEATETSL (76 aa)) are disordered. Positions 300 to 315 (CQERGLQEAVRREHQE) are enriched in basic and acidic residues. In terms of domain architecture, Protein kinase spans 484 to 798 (LQRCEKIGEG…DLLCQHSLFK (315 aa)). Residues 490–498 (IGEGVFGEV), Lys511, 606–611 (EFGGID), 649–654 (DLHWGN), and 687–689 (DYT) contribute to the ATP site. Asp649 (proton acceptor) is an active-site residue.

Belongs to the protein kinase superfamily. Ser/Thr protein kinase family. Haspin subfamily. Mg(2+) is required as a cofactor. Autophosphorylated on both serine and threonine residues. Strongly phosphorylated during mitosis but this does not appear to significantly affect its intrinsic kinase activity. Phosphorylation by AURKB is required for full activity toward histone H3 at 'Ser-3' in mitosis. Strongly expressed in testis. Also present in thymus and bone marrow and low levels observed in prostate, intestine, lung, spleen and lymph node. Expressed in fetal skin, liver, kidney and small intestine and also in proliferating but not non-proliferating cell lines.

It localises to the nucleus. Its subcellular location is the chromosome. The protein localises to the cytoplasm. It is found in the cytoskeleton. The protein resides in the spindle. The catalysed reaction is L-seryl-[protein] + ATP = O-phospho-L-seryl-[protein] + ADP + H(+). It catalyses the reaction L-threonyl-[protein] + ATP = O-phospho-L-threonyl-[protein] + ADP + H(+). With respect to regulation, constitutive activity that does not require phosphorylation. Specifically inhibited by 3-(1H-indazol-5-yl)-N-propylimidazo[1,2-b]pyridazin-6-amine (CHR-6494). Serine/threonine-protein kinase that phosphorylates histone H3 at 'Thr-3' (H3T3ph) during mitosis. May act through H3T3ph to both position and modulate activation of AURKB and other components of the chromosomal passenger complex (CPC) at centromeres to ensure proper chromatid cohesion, metaphase alignment and normal progression through the cell cycle. The chain is Serine/threonine-protein kinase haspin from Homo sapiens (Human).